A 351-amino-acid chain; its full sequence is SKP1-like protein 21 (351 aa).

An interaction with the F-box domain of F-box proteins region spans residues 108–167; the sequence is TSAADSLQLKPLVDLTSRALARIIEGKTPEEIREIFHLPDDLTEEEKLEPLKNTMDDPRI. Disordered regions lie at residues 216–240 and 330–351; these read VKTS…NGTC and VNFS…AGHK. The span at 217–230 shows a compositional bias: basic residues; that stretch reads KTSKSKKKNKKRKE. A compositionally biased stretch (polar residues) spans 330–342; the sequence is VNFSINGNGTSRR.

It belongs to the SKP1 family. In terms of assembly, part of a SCF (SKP1-cullin-F-box) protein ligase complex. As to expression, expressed in young seedlings, roots, leaves, floral stems, inflorescences, and siliques.

It is found in the nucleus. It participates in protein modification; protein ubiquitination. Functionally, involved in ubiquitination and subsequent proteasomal degradation of target proteins. Together with CUL1, RBX1 and a F-box protein, it forms a SCF E3 ubiquitin ligase complex. The functional specificity of this complex depends on the type of F-box protein. In the SCF complex, it serves as an adapter that links the F-box protein to CUL1. This is SKP1-like protein 21 (ASK21) from Arabidopsis thaliana (Mouse-ear cress).